The following is a 908-amino-acid chain: Vacuolar membrane protease (908 aa).

Positions 1–25 (MTSGEEEEGTREQVPVSQPTGTTSI) are disordered. At 1–48 (MTSGEEEEGTREQVPVSQPTGTTSIVSTKEKQPNIFIRAIRATFGYRK) the chain is on the cytoplasmic side. Positions 15-25 (PVSQPTGTTSI) are enriched in polar residues. The helical transmembrane segment at 49–69 (TSLTLFVLLTIFFTVAFSSYD) threads the bilayer. The Vacuolar portion of the chain corresponds to 70–381 (NSLDFTIDLP…FSTSVTTLNT (312 aa)). N-linked (GlcNAc...) asparagine glycans are attached at residues asparagine 143 and asparagine 162. Residues histidine 176 and aspartate 188 each coordinate Zn(2+). The Proton acceptor role is filled by glutamate 221. Residues glutamate 222, glutamate 247, and histidine 319 each contribute to the Zn(2+) site. Asparagine 354 is a glycosylation site (N-linked (GlcNAc...) asparagine). The chain crosses the membrane as a helical span at residues 382 to 402 (INMVLIVLFPVLSGPLLFITV). Residues 403–411 (RYKKWNIGT) lie on the Cytoplasmic side of the membrane. The chain crosses the membrane as a helical span at residues 412–432 (ANLFSLPLAIVITSLVGAVVV). At 433 to 449 (NQGFRLVNEFLPASRPM) the chain is on the vacuolar side. Residues 450–470 (LLVTTTTSILLLTYYILLNGI) form a helical membrane-spanning segment. The Cytoplasmic portion of the chain corresponds to 471 to 480 (NFVSPSGDQK). A helical membrane pass occupies residues 481-501 (LVSIIQISFIYWIALIFVTRG). Residues 502 to 514 (LSQNAIGDDHTGE) are Vacuolar-facing. A helical transmembrane segment spans residues 515–535 (FAFTILFLLEATASLFGLIGW). The Cytoplasmic portion of the chain corresponds to 536-602 (TFTRSVKEPT…MQHFGYDWSL (67 aa)). The interval 543-584 (EPTGDEEPLLNGRMERYVDGSDDEDDVEEEDDEDQSEEENHQ) is disordered. Acidic residues predominate over residues 562 to 579 (GSDDEDDVEEEDDEDQSE). Residues 603–623 (QFLLIVPISSLVIYNSGWLVI) form a helical membrane-spanning segment. Over 624 to 638 (DGINKSIQESLVAEN) the chain is Vacuolar. An N-linked (GlcNAc...) asparagine glycan is attached at asparagine 627. Residues 639–659 (FIYLIIQLFSQFWILPILPFV) traverse the membrane as a helical segment. The Cytoplasmic portion of the chain corresponds to 660–664 (YKLNR). A helical transmembrane segment spans residues 665–685 (FMVLGLIAFALVGVTLISSVD). At 686 to 908 (PFNQDNPLKL…LVSLTNRIEV (223 aa)) the chain is on the vacuolar side. N-linked (GlcNAc...) asparagine glycosylation is found at asparagine 752 and asparagine 764.

Belongs to the peptidase M28 family. It depends on Zn(2+) as a cofactor.

The protein localises to the vacuole membrane. Its function is as follows. May be involved in vacuolar sorting and osmoregulation. The protein is Vacuolar membrane protease of Candida tropicalis (strain ATCC MYA-3404 / T1) (Yeast).